The following is a 359-amino-acid chain: MSKIFDFVKPGVITGDDVQKVFQVAKENNFALPAVNCVGTDSINAVLETAAKVKAPVIVQFSNGGASFIAGKGVKSDVPQGAAILGAISGAHHVHQMAEHYGVPVILHTDHCAKKLLPWIDGLLDAGEKHFAATGKPLFSSHMIDLSEESLQENIEICSKYLERMSKIGMTLEIELGCTGGEEDGVDNSHMDASALYTQPEDVDYAYTELSKISPRFTIAASFGNVHGVYKPGNVVLTPTILRDSQEYVSKKHNLPHNSLNFVFHGGSGSTAQEIKDSVSYGVVKMNIDTDTQWATWEGVLNYYKANEAYLQGQLGNPKGEDQPNKKYYDPRVWLRAGQTSMIARLEKAFQELNAIDVL.

Position 9 is an N6-acetyllysine (K9). S62 is a D-glyceraldehyde 3-phosphate binding site. D110 acts as the Proton donor in catalysis. The Zn(2+) site is built by H111, D145, E175, and H227. G228 contributes to the dihydroxyacetone phosphate binding site. Zn(2+) is bound at residue H265. Dihydroxyacetone phosphate contacts are provided by residues 266–268 (GGS) and 287–290 (NIDT).

Belongs to the class II fructose-bisphosphate aldolase family. In terms of assembly, homodimer. Zn(2+) serves as cofactor.

It catalyses the reaction beta-D-fructose 1,6-bisphosphate = D-glyceraldehyde 3-phosphate + dihydroxyacetone phosphate. It participates in carbohydrate degradation; glycolysis; D-glyceraldehyde 3-phosphate and glycerone phosphate from D-glucose: step 4/4. Its function is as follows. Catalyzes the aldol condensation of dihydroxyacetone phosphate (DHAP or glycerone-phosphate) with glyceraldehyde 3-phosphate (G3P) to form fructose 1,6-bisphosphate (FBP) in gluconeogenesis and the reverse reaction in glycolysis. The chain is Fructose-bisphosphate aldolase class 2 (fbaA) from Escherichia coli O157:H7.